A 511-amino-acid chain; its full sequence is MLLVDVAGASADVAASSARLAKIARIAELLRRAGREDVAIVVSWLSGELTQRQIGVGWASLRSVPAAAAEPTLTVAEVERRFGEIGATAGRGSQARRAQLLADLFSAATDVEQTFLRRLLTGELRQGALVGVMADAVAKAADLPAATVRRAAMLGGDLPAVAAAALTDGDAGLAQFTLQAGKAVGPMLAQTAADVTDALDRLGGTAMFEAKLDGARVQIHRRGDSVSIFTRSLDDVTARLPEVVEATLALPVTDLIADAEAIALRPDGRPHRFQVTASRFGRRGGTSDTASNPLSVFFFDLLHVDGVDLLDAPAHERIARLDAVTPDSQRVDRLVTSDPGAAQEFFDRTLAAGHEGVMAKSTVAPYEAGRRGAGWLKVKPVHTLDLVVLAVEWGSGRRSGKLSNIHLGARDPGTGGFVMLGKTFKGMTDEMLAWQTRRFLDLADGDATDHYVVKVRPEQVVEIAFDGLQTSTRYPGGMALRFARVVRYRDDKAATDADTIDTVREIYERGN.

Glutamate 209 is an ATP binding site. Lysine 211 serves as the catalytic N6-AMP-lysine intermediate. Arginine 216, arginine 231, glutamate 260, phenylalanine 299, arginine 371, and lysine 377 together coordinate ATP.

The protein belongs to the ATP-dependent DNA ligase family. Mg(2+) is required as a cofactor.

It catalyses the reaction ATP + (deoxyribonucleotide)n-3'-hydroxyl + 5'-phospho-(deoxyribonucleotide)m = (deoxyribonucleotide)n+m + AMP + diphosphate.. In terms of biological role, DNA ligase that seals nicks in double-stranded DNA during DNA replication, DNA recombination and DNA repair. The protein is Probable DNA ligase of Mycolicibacterium gilvum (strain PYR-GCK) (Mycobacterium gilvum (strain PYR-GCK)).